The chain runs to 126 residues: Anti-adapter protein IraD (126 aa).

It belongs to the GpW/Gp25 family. IraD subfamily. In terms of assembly, interacts with RssB.

Its subcellular location is the cytoplasm. Inhibits RpoS proteolysis by regulating RssB activity, thereby increasing the stability of the sigma stress factor RpoS during oxidative stress. Its effect on RpoS stability is due to its interaction with RssB, which probably blocks the interaction of RssB with RpoS, and the consequent delivery of the RssB-RpoS complex to the ClpXP protein degradation pathway. This Salmonella choleraesuis (strain SC-B67) protein is Anti-adapter protein IraD.